We begin with the raw amino-acid sequence, 471 residues long: Putative multidrug resistance protein MdtD (471 aa).

Topologically, residues 1-11 are periplasmic; that stretch reads MTDLPDSTRWQ. A helical transmembrane segment spans residues 12 to 32; it reads LWIVAFGFFMQSLDTTIVNTA. The Cytoplasmic portion of the chain corresponds to 33–48; that stretch reads LPSMAQSLGESPLHMH. A helical membrane pass occupies residues 49–69; that stretch reads MVIVSYVLTVAVMLPASGWLA. Residues 70-76 are Periplasmic-facing; that stretch reads DKVGVRN. Residues 77–97 traverse the membrane as a helical segment; it reads IFFTAIVLFTLGSLFCALSGT. At 98-101 the chain is on the cytoplasmic side; the sequence is LNEL. The helical transmembrane segment at 102–124 threads the bilayer; sequence LLARALQGVGGAMMVPVGRLTVM. Topologically, residues 125–137 are periplasmic; sequence KIVPREQYMAAMT. Residues 138–158 form a helical membrane-spanning segment; the sequence is FVTLPGQVGPLLGPALGGLLV. The Cytoplasmic portion of the chain corresponds to 159-164; that stretch reads EYASWH. A helical transmembrane segment spans residues 165–185; the sequence is WIFLINIPVGIIGAIATLMLM. The Periplasmic portion of the chain corresponds to 186 to 196; the sequence is PNYTMQTRRFD. A helical transmembrane segment spans residues 197–217; the sequence is LSGFLLLAVGMAVLTLALDGS. Over 218–224 the chain is Cytoplasmic; that stretch reads KGTGLSP. Residues 225-245 form a helical membrane-spanning segment; that stretch reads LTIDGLVAVGVVALVLYLLHA. The Periplasmic portion of the chain corresponds to 246–262; the sequence is RNNNRALFSLKLFRTRT. The chain crosses the membrane as a helical span at residues 263–283; that stretch reads FSLGLAGSFAGRIGSGMLPFM. Residues 284–285 lie on the Cytoplasmic side of the membrane; sequence TP. A helical transmembrane segment spans residues 286–306; the sequence is VFLQIGLGFSPFHAGLMMIPM. At 307–341 the chain is on the periplasmic side; that stretch reads VLGSMGMKRIVVQVVNRFGYRRVLVATTLGLSLVT. Residues 342–362 traverse the membrane as a helical segment; it reads LLFMTTALLGWYYVLPFVLFL. At 363-395 the chain is on the cytoplasmic side; that stretch reads QGMVNSTRFSSMNTLTLKDLPDNLASSGNSLLS. A helical membrane pass occupies residues 396-416; sequence MIMQLSMSIGVTIAGLLLGLF. The Periplasmic portion of the chain corresponds to 417-430; it reads GSQHVSIDSGTTQT. A helical transmembrane segment spans residues 431–451; sequence VFMYTWLSMALIIALPAFIFA. At 452–471 the chain is on the cytoplasmic side; that stretch reads RVPNDTHQNVAISRRKRSAQ.

This sequence belongs to the major facilitator superfamily. TCR/Tet family.

The protein localises to the cell inner membrane. In Escherichia coli (strain SE11), this protein is Putative multidrug resistance protein MdtD.